The following is a 601-amino-acid chain: Glutathione-regulated potassium-efflux system protein KefB (601 aa).

13 consecutive transmembrane segments (helical) span residues 4–24 (ADLLTAGVLFLFAAVAAVPLA), 29–49 (IGAVLGYLLAGIAIGPWGLGF), 55–75 (EILHFSELGVVFLMFIIGLEL), 87–107 (IFGVGAAQVLLSAAVLAGLLM), 111–131 (FLWQAAVVGGIGLAMSSTAMA), 152–172 (VLLFQDLAVIPALALVPLLAG), 177–197 (HFDWFKVAMKVLAFAVMLIGG), 207–227 (FIAASGVREVFTAATLLLVLS), 230–250 (LFMDALGLSMALGTFIAGVLL), 262–282 (AIDPFKGLLLGLFFISVGMSL), 284–304 (LGVLYTHLLWVAASVVILVVI), 324–344 (MQFASVLSQGGEFAFVLFSTA), and 356–376 (ALLLVTVTLSMMTTPLLMKGI). Residues 400 to 519 (KPQVIVVGFG…AGVTQFSRET (120 aa)) enclose the RCK N-terminal domain.

This sequence belongs to the monovalent cation:proton antiporter 2 (CPA2) transporter (TC 2.A.37) family. KefB subfamily. Interacts with the regulatory subunit KefG.

It localises to the cell inner membrane. Pore-forming subunit of a potassium efflux system that confers protection against electrophiles. Catalyzes K(+)/H(+) antiport. In Salmonella heidelberg (strain SL476), this protein is Glutathione-regulated potassium-efflux system protein KefB.